We begin with the raw amino-acid sequence, 436 residues long: Tol-Pal system protein TolB (436 aa).

An N-terminal signal peptide occupies residues 1-28; the sequence is MRSFLKPLLTIAAMALGMTAVIPMPAWA.

The protein belongs to the TolB family. As to quaternary structure, the Tol-Pal system is composed of five core proteins: the inner membrane proteins TolA, TolQ and TolR, the periplasmic protein TolB and the outer membrane protein Pal. They form a network linking the inner and outer membranes and the peptidoglycan layer.

It is found in the periplasm. In terms of biological role, part of the Tol-Pal system, which plays a role in outer membrane invagination during cell division and is important for maintaining outer membrane integrity. The chain is Tol-Pal system protein TolB from Mesorhizobium japonicum (strain LMG 29417 / CECT 9101 / MAFF 303099) (Mesorhizobium loti (strain MAFF 303099)).